The primary structure comprises 332 residues: L-lactate dehydrogenase A chain (332 aa).

Residues 29 to 57 (GAVGMACAISILMKDLADELALVDVIEDK) and arginine 99 each bind NAD(+). Residues arginine 106, asparagine 138, and arginine 169 each contribute to the substrate site. Asparagine 138 contributes to the NAD(+) binding site. The active-site Proton acceptor is histidine 193. Threonine 248 serves as a coordination point for substrate.

The protein belongs to the LDH/MDH superfamily. LDH family. Homotetramer.

It localises to the cytoplasm. The catalysed reaction is (S)-lactate + NAD(+) = pyruvate + NADH + H(+). Its pathway is fermentation; pyruvate fermentation to lactate; (S)-lactate from pyruvate: step 1/1. Functionally, interconverts simultaneously and stereospecifically pyruvate and lactate with concomitant interconversion of NADH and NAD(+). This Pelodiscus sinensis japonicus (Chinese soft-shelled turtle) protein is L-lactate dehydrogenase A chain (LDHA).